The sequence spans 310 residues: MNDFVFSDIPDILKPMASVEFDDPLTKATGDVLNWTLWLIRNFPALSNIIMRLPSSLVSIVTSSFEGANQMFQVTTSTHNLYSASLPTHATKQIISKLVEHEKTHIGPKNKDCVVQRLLNAHRDSESKISIPTPDATVRSEAIGFTLAGTADPPNILALGTFMAARDPEMQEGLYKELRAVWPDLRSPVPSYNLLHQLPLLRGVVKESIRFTHGVATGPARLVGAGGARIGGYNVPAKASLAVVAAPSYFVHMDETVFSEPEKFEPRRWADNDYSKSLVAFSRGRRMCPAEQFHVEPYETTSVPRSEERG.

A heme-binding site is contributed by cysteine 288.

The protein belongs to the cytochrome P450 family. Requires heme as cofactor.

It participates in secondary metabolite biosynthesis. Functionally, cytochrome P450 monooxygenase; part of the gene cluster that mediates the biosynthesis of pyrrolopyrazines, secondary metabolites showing insecticidal activity. The role of ppzG within the pathway has still to be determined. The single multifunctional NRPS ppzA is sufficient to produce peramine via condensation of 1-pyrroline-5-carboxylate and arginine, N-methylation of the alpha-amino group of arginine and reduction of the thioester and the cyclization to form an iminium ion resulting in release from the peptide synthetase. Deprotonation of this intermediate and oxidation of the pyrroline ring would give rise to peramine. In Epichloe species that produce only peramine, the peramine synthetase gene is not localized in a gene cluster, in contrast to Metarhizium species that contain additional pyrrolopyrazine biosynthesis genes. The 2-oxoglutarate-Fe(II) type oxidoreductase ppzC hydroxylates peramine to yield the newly identified compound 8-hydroxyperamine whereas ppzD converts L-proline into trans-4-hydroxy-L-proline, a precursor of peramine biosynthesis. The protein is Cytochrome P450 monooxygenase ppzG (ppzG) of Metarhizium majus (strain ARSEF 297).